Here is a 149-residue protein sequence, read N- to C-terminus: 3-dehydroquinate dehydratase (149 aa).

The Proton acceptor role is filled by Tyr26. Substrate is bound by residues Asn78, His84, and Asp91. His104 (proton donor) is an active-site residue. Residues 105 to 106 (LS) and Arg115 each bind substrate.

Belongs to the type-II 3-dehydroquinase family. Homododecamer.

It carries out the reaction 3-dehydroquinate = 3-dehydroshikimate + H2O. It participates in metabolic intermediate biosynthesis; chorismate biosynthesis; chorismate from D-erythrose 4-phosphate and phosphoenolpyruvate: step 3/7. Catalyzes a trans-dehydration via an enolate intermediate. The polypeptide is 3-dehydroquinate dehydratase (Polynucleobacter necessarius subsp. necessarius (strain STIR1)).